A 374-amino-acid polypeptide reads, in one-letter code: uncharacterized protein (374 aa).

The first 21 residues, Met-1–Ala-21, serve as a signal peptide directing secretion. Residues Lys-22 to Ser-102 form the Fibronectin type-III domain.

This is an uncharacterized protein from Treponema pallidum (strain Nichols).